The sequence spans 543 residues: Carboxypeptidase Y homolog A (543 aa).

The first 17 residues, 1 to 17, serve as a signal peptide directing secretion; sequence MRVAASALLAGAASAAV. The propeptide occupies 18–128; the sequence is APQQQILKFP…KLEQFDLRVK (111 aa). 5 disulfides stabilise this stretch: C182-C421, C316-C330, C340-C363, C347-C356, and C385-C391. A glycan (N-linked (GlcNAc...) asparagine) is linked at N213. The active site involves S269. D460 is a catalytic residue. N-linked (GlcNAc...) asparagine glycosylation is present at N508. Residue H519 is part of the active site.

The protein belongs to the peptidase S10 family.

It localises to the vacuole. It catalyses the reaction Release of a C-terminal amino acid with broad specificity.. Vacuolar carboxypeptidase involved in degradation of small peptides. Digests preferentially peptides containing an aliphatic or hydrophobic residue in P1' position, as well as methionine, leucine or phenylalanine in P1 position of ester substrate. This Phaeosphaeria nodorum (strain SN15 / ATCC MYA-4574 / FGSC 10173) (Glume blotch fungus) protein is Carboxypeptidase Y homolog A (CPYA).